Consider the following 277-residue polypeptide: Ribosomal RNA small subunit methyltransferase A (277 aa).

6 residues coordinate S-adenosyl-L-methionine: Asn-20, Leu-22, Gly-47, Glu-68, Asp-93, and Asn-114.

Belongs to the class I-like SAM-binding methyltransferase superfamily. rRNA adenine N(6)-methyltransferase family. RsmA subfamily.

It localises to the cytoplasm. The enzyme catalyses adenosine(1518)/adenosine(1519) in 16S rRNA + 4 S-adenosyl-L-methionine = N(6)-dimethyladenosine(1518)/N(6)-dimethyladenosine(1519) in 16S rRNA + 4 S-adenosyl-L-homocysteine + 4 H(+). Its function is as follows. Specifically dimethylates two adjacent adenosines (A1518 and A1519) in the loop of a conserved hairpin near the 3'-end of 16S rRNA in the 30S particle. May play a critical role in biogenesis of 30S subunits. The sequence is that of Ribosomal RNA small subunit methyltransferase A from Aliivibrio salmonicida (strain LFI1238) (Vibrio salmonicida (strain LFI1238)).